The primary structure comprises 543 residues: MRWRYTIRDQSPFEESSNCHRLTSSETANTFRWPMRTYNVYGFLLTCTCLLLILTIIPMSGGSSERVQRSVRSVVETKNNIKYGVICDAGSSGTRLFVYTLKPLSGGLTNIDTLIHESEPVVKKVTPGLSSFGDKPEQVVEYLTPLLRFAEEHIPYEQLGETDLLIFATAGMRLLPEAQKDAIIKNLQNGLKSVTALRVSDSNIRIIDGAWEGIYSWIAVNYILGRFDKENDSKVGMIDMGGASVQIAFEIANEKESYNGGNVYEINLGSIETNEDYKYKIYSTTFLGYGANEGLKKYENSLVKSGNSNDSCSPRGLNRLIGEFTVNGTGEWDVCLAQVSSLIGDKAQPSCPNPTCFLRNVIAPSVNLSTVQLYGFSEYWYTTSNFGSGGEYHYQKFTDEVRKYCQKDWNDIQDGFKRNEFPNADIERLGTNCFKAAWVTSVLHDGFNVDKTKHLFQSVLKIAGEEMQWALGAMLYHSKDLKFNLLEQLEVAQSTQQISNFFSFFVILIIVLAVALYRQLQSESTYKKYNFLRTDSKPDFLNV.

The helical transmembrane segment at 40 to 60 threads the bilayer; sequence VYGFLLTCTCLLLILTIIPMS. Glu-212 (proton acceptor) is an active-site residue. The helical transmembrane segment at 497 to 517 threads the bilayer; it reads QISNFFSFFVILIIVLAVALY.

This sequence belongs to the GDA1/CD39 NTPase family.

Its subcellular location is the golgi apparatus membrane. The catalysed reaction is a ribonucleoside 5'-triphosphate + H2O = a ribonucleoside 5'-diphosphate + phosphate + H(+). Seems to be able to hydrolyze CTP, ATP and UTP. The polypeptide is Nucleoside-triphosphatase ntp-1 (Caenorhabditis elegans).